Reading from the N-terminus, the 163-residue chain is Nucleotide-binding protein PC1_1036 (163 aa).

Belongs to the YajQ family.

Its function is as follows. Nucleotide-binding protein. This is Nucleotide-binding protein PC1_1036 from Pectobacterium carotovorum subsp. carotovorum (strain PC1).